The chain runs to 90 residues: Putative membrane protein insertion efficiency factor (90 aa).

The tract at residues 68–90 (VPAHFSLRRNPQYKEEDHRGKKR) is disordered. Positions 79–90 (QYKEEDHRGKKR) are enriched in basic and acidic residues.

It belongs to the UPF0161 family.

The protein resides in the cell membrane. Functionally, could be involved in insertion of integral membrane proteins into the membrane. The protein is Putative membrane protein insertion efficiency factor of Lactiplantibacillus plantarum (strain ATCC BAA-793 / NCIMB 8826 / WCFS1) (Lactobacillus plantarum).